The sequence spans 143 residues: Transcriptional regulator MraZ (143 aa).

SpoVT-AbrB domains lie at 5–47 and 76–119; these read EYQH…PLTE and AMEG…AKER.

The protein belongs to the MraZ family. As to quaternary structure, forms oligomers.

The protein resides in the cytoplasm. It is found in the nucleoid. This chain is Transcriptional regulator MraZ, found in Lactobacillus delbrueckii subsp. bulgaricus (strain ATCC 11842 / DSM 20081 / BCRC 10696 / JCM 1002 / NBRC 13953 / NCIMB 11778 / NCTC 12712 / WDCM 00102 / Lb 14).